We begin with the raw amino-acid sequence, 600 residues long: ATP-dependent lipid A-core flippase (600 aa).

Transmembrane regions (helical) follow at residues 26–46, 82–102, 167–187, and 266–286; these read VGIFLLSIIGFVIFASTQPML, LLIVLIAAWQGLGSFLGNYFL, VFLFIYLLMMNWKLTLVMLAI, and PMLQLVIYSAMAVLMFLVLFL. In terms of domain architecture, ABC transmembrane type-1 spans 30-321; sequence LLSIIGFVIF…LSEVSSTIQK (292 aa). The 237-residue stretch at 353–589 folds into the ABC transporter domain; sequence LEVKNLSFFY…NGYYARLHAM (237 aa). An ATP-binding site is contributed by 387 to 394; sequence GRSGSGKS.

Belongs to the ABC transporter superfamily. Lipid exporter (TC 3.A.1.106) family. In terms of assembly, homodimer.

It localises to the cell inner membrane. It catalyses the reaction ATP + H2O + lipid A-core oligosaccharideSide 1 = ADP + phosphate + lipid A-core oligosaccharideSide 2.. Its function is as follows. Involved in lipopolysaccharide (LPS) biosynthesis. Translocates lipid A-core from the inner to the outer leaflet of the inner membrane. Transmembrane domains (TMD) form a pore in the inner membrane and the ATP-binding domain (NBD) is responsible for energy generation. The polypeptide is ATP-dependent lipid A-core flippase (Pseudomonas savastanoi pv. phaseolicola (strain 1448A / Race 6) (Pseudomonas syringae pv. phaseolicola (strain 1448A / Race 6))).